The primary structure comprises 109 residues: Insulin (109 aa).

The first 24 residues, 1–24, serve as a signal peptide directing secretion; the sequence is MAPWMHLLTVLALLALWGPNSVQA. 3 cysteine pairs are disulfide-bonded: cysteine 31/cysteine 93, cysteine 43/cysteine 106, and cysteine 92/cysteine 97. Residues 56–84 constitute a propeptide, c peptide; sequence ELEDLQVEQAELGLEAGGLQPSALEMILQ.

This sequence belongs to the insulin family. As to quaternary structure, heterodimer of a B chain and an A chain linked by two disulfide bonds.

Its subcellular location is the secreted. Insulin decreases blood glucose concentration. It increases cell permeability to monosaccharides, amino acids and fatty acids. It accelerates glycolysis, the pentose phosphate cycle, and glycogen synthesis in liver. The protein is Insulin (INS) of Octodon degus (Degu).